Reading from the N-terminus, the 110-residue chain is Flagellar hook-basal body complex protein FliE (110 aa).

Belongs to the FliE family.

It localises to the bacterial flagellum basal body. The protein is Flagellar hook-basal body complex protein FliE of Pseudomonas putida (strain W619).